The sequence spans 901 residues: Pantothenate kinase 2 (901 aa).

A compositionally biased stretch (acidic residues) spans 1–10 (MAGQEDEYDP). A disordered region spans residues 1–50 (MAGQEDEYDPILDNKREAEAKSQVSVAADKNMAPSTSGTPIHRSGSRPQL). A pantothenate kinase region spans residues 1–466 (MAGQEDEYDP…LGDLDEKISW (466 aa)). Positions 467 to 901 (MEKFVRRGTE…CVCRYEPPSL (435 aa)) are 4'-phosphopantetheine phosphatase. Mn(2+) is bound by residues D731, N732, and D767. The Subfamily II EGMGR motif signature appears at 851 to 855 (EGMGR).

The protein in the N-terminal section; belongs to the type II pantothenate kinase family. In the C-terminal section; belongs to the damage-control phosphatase family. Phosphopantetheine phosphatase II subfamily. Requires Mn(2+) as cofactor. Ni(2+) is required as a cofactor. In terms of tissue distribution, highly expressed in leaves and developing seeds. Expressed in roots, stems and flowers.

It carries out the reaction (R)-pantothenate + ATP = (R)-4'-phosphopantothenate + ADP + H(+). The enzyme catalyses (R)-4'-phosphopantothenate + H2O = (R)-pantothenate + phosphate. The catalysed reaction is (R)-4'-phosphopantetheine + H2O = (R)-pantetheine + phosphate. It catalyses the reaction (R)-4'-phosphopantetheine sulfonate + H2O = (R)-pantetheine sulfonate + phosphate. The protein operates within cofactor biosynthesis; coenzyme A biosynthesis; CoA from (R)-pantothenate: step 1/5. Its activity is regulated as follows. Activity is strongly promoted by Co(2+), Ni(2+) and Mn(2+). Activity is inhibited by EDTA. In terms of biological role, catalyzes the phosphorylation of pantothenate the first step in CoA biosynthesis. May play a role in the physiological regulation of the intracellular CoA concentration. Functionally redudant with PANK1. The phosphatase activity shows preference for normal or oxidatively damaged intermediates of 4'-phosphopantetheine, which provides strong indirect evidence that the phosphatase activity pre-empts damage in the CoA pathway. Hydrolyzing excess 4'-phosphopantetheine could constitute a directed overflow mechanism to prevent its oxidation to the S-sulfonate, sulfonate, or other forms. Hydrolyzing 4'-phosphopantetheine sulfonate or S-sulfonate would forestall their conversion to inactive forms of CoA and acyl carrier protein. The chain is Pantothenate kinase 2 (PANK2) from Arabidopsis thaliana (Mouse-ear cress).